The primary structure comprises 1124 residues: SH3 and PX domain-containing protein 2A (1124 aa).

Residues 4–128 (YCVQDATVVD…RFFEARPEDV (125 aa)) enclose the PX domain. Residues 166–225 (MILEQYVVVSNYKKQENSELSLQAGEVVDVIEKNESGWWFVSTSEEQGWVPATYLEAQNG) enclose the SH3 1 domain. Residue Thr256 is modified to Phosphothreonine. Positions 266-325 (SREEKYVTVQPYTSQSKDEIGFEKGVTVEVIRKNLEGWWYIRYLGKEGWAPASYLKKAKD) constitute an SH3 2 domain. Residues Ser405 and Ser420 each carry the phosphoserine modification. Disordered stretches follow at residues 414-443 (QRAQ…PKPP), 504-672 (RKKP…KLKA), 692-830 (SVTI…PKKE), and 886-952 (YLVA…GKTS). The SH3 3 domain occupies 447-506 (SVEVEYYTIAEFQSCISDGISFRGGQKAEVIDKNSGGWWYVQIGEKEGWAPASYIDKRKK). A phosphoserine mark is found at Ser546 and Ser566. Residues 575 to 585 (SGDRGSGDKHP) show a composition bias toward basic and acidic residues. The residue at position 592 (Ser592) is a Phosphoserine. A compositionally biased stretch (acidic residues) spans 607 to 619 (SSEDVALEEETIY). Composition is skewed to low complexity over residues 633–669 (SARG…SLLK) and 692–709 (SVTI…SSLS). Position 643 is a phosphoserine (Ser643). A compositionally biased stretch (basic and acidic residues) spans 713–739 (GDLKPRSASDAGIRDTPKVGTKKDPDV). At Thr728 the chain carries Phosphothreonine. Phosphoserine occurs at positions 764, 766, and 812. Thr822 carries the phosphothreonine modification. The 60-residue stretch at 833-892 (GQGATYVTCSAYQKVQDSEISFPEGAEVHVLEKAESGWWYVRFGELEGWAPSHYLVAEEN) folds into the SH3 4 domain. A coiled-coil region spans residues 907–937 (SSQNEGKSDSLEKIEKRVQALNTVNQSKRAT). Residues 912 to 924 (GKSDSLEKIEKRV) show a composition bias toward basic and acidic residues. A compositionally biased stretch (polar residues) spans 926–935 (ALNTVNQSKR). 4 positions are modified to phosphoserine: Ser993, Ser1007, Ser1008, and Ser1029. Positions 1020–1050 (KGRLAERAASQGSESPLLPTQRKGIPVSPVR) are disordered. One can recognise an SH3 5 domain in the interval 1063–1124 (NLKDVYISIA…VPSNYLEKKN (62 aa)).

It belongs to the SH3PXD2 family. Interacts with ADAM12, ADAM15 and ADAM19. Interacts with NOXO1. Interacts (via SH3 domains) with NOXA1; the interaction is direct. Interacts (via N-terminus) with CYBA. Interacts with FASLG. Interacts (via PX domain) with RAB40B (GTP-bound); interaction promotes invadopodia-mediated extracellular matrix degradation. In terms of processing, tyrosine phosphorylated by SRC. Phosphorylation plays a regulatory role in the protein localization. The intramolecular interaction of the PX domain with the third SH3 domain maintains the protein in the cytoplasm and phosphorylation disrupts this interaction, resulting in the redistribution of the protein from cytoplasm to the perimembrane region. Phosphorylated on serine upon DNA damage, probably by ATM or ATR. As to expression, widely expressed. Not found in the spleen and testis.

The protein localises to the cytoplasm. Its subcellular location is the cell projection. It is found in the podosome. Functionally, adapter protein involved in invadopodia and podosome formation, extracellular matrix degradation and invasiveness of some cancer cells. Binds matrix metalloproteinases (ADAMs), NADPH oxidases (NOXs) and phosphoinositides. Acts as an organizer protein that allows NOX1- or NOX3-dependent reactive oxygen species (ROS) generation and ROS localization. In association with ADAM12, mediates the neurotoxic effect of amyloid-beta peptide. This chain is SH3 and PX domain-containing protein 2A, found in Mus musculus (Mouse).